A 545-amino-acid polypeptide reads, in one-letter code: Glucans biosynthesis protein G (545 aa).

The N-terminal stretch at 1–34 is a signal peptide; the sequence is MVSLLRCQSFKPSSSLICSLALSAAFALSSSAFA. The segment at 38–60 is disordered; it reads KPAENKPATPVVSPPKATAQPAN.

It belongs to the OpgD/OpgG family.

The protein localises to the periplasm. It functions in the pathway glycan metabolism; osmoregulated periplasmic glucan (OPG) biosynthesis. Its function is as follows. Involved in the biosynthesis of osmoregulated periplasmic glucans (OPGs). The chain is Glucans biosynthesis protein G from Shewanella sp. (strain MR-7).